The primary structure comprises 693 residues: Elongation factor G (693 aa).

The region spanning 8–282 (EKTRNIGIMA…AVVDYLPSPL (275 aa)) is the tr-type G domain. GTP-binding positions include 17–24 (AHVDAGKT), 81–85 (DTPGH), and 135–138 (NKMD).

This sequence belongs to the TRAFAC class translation factor GTPase superfamily. Classic translation factor GTPase family. EF-G/EF-2 subfamily.

It is found in the cytoplasm. Catalyzes the GTP-dependent ribosomal translocation step during translation elongation. During this step, the ribosome changes from the pre-translocational (PRE) to the post-translocational (POST) state as the newly formed A-site-bound peptidyl-tRNA and P-site-bound deacylated tRNA move to the P and E sites, respectively. Catalyzes the coordinated movement of the two tRNA molecules, the mRNA and conformational changes in the ribosome. This is Elongation factor G from Streptococcus mutans serotype c (strain ATCC 700610 / UA159).